The sequence spans 66 residues: Cold shock protein 2 (66 aa).

Positions 4–63 (GTVKWFNADKGFGFITGEDGTDVFVHFSAIQTDGFKTLDEGQKVTYDEEQGDRGPQATNV) constitute a CSD domain.

Its subcellular location is the cytoplasm. This chain is Cold shock protein 2 (cspL), found in Lactiplantibacillus plantarum (strain ATCC BAA-793 / NCIMB 8826 / WCFS1) (Lactobacillus plantarum).